The following is a 190-amino-acid chain: Xanthine phosphoribosyltransferase (190 aa).

2 residues coordinate xanthine: leucine 20 and asparagine 27. Position 128 to 132 (128 to 132) interacts with 5-phospho-alpha-D-ribose 1-diphosphate; the sequence is ANGKA. Lysine 156 contacts xanthine.

This sequence belongs to the purine/pyrimidine phosphoribosyltransferase family. Xpt subfamily. Homodimer.

It localises to the cytoplasm. The enzyme catalyses XMP + diphosphate = xanthine + 5-phospho-alpha-D-ribose 1-diphosphate. It participates in purine metabolism; XMP biosynthesis via salvage pathway; XMP from xanthine: step 1/1. In terms of biological role, converts the preformed base xanthine, a product of nucleic acid breakdown, to xanthosine 5'-monophosphate (XMP), so it can be reused for RNA or DNA synthesis. The polypeptide is Xanthine phosphoribosyltransferase (Pseudomonas fluorescens (strain SBW25)).